We begin with the raw amino-acid sequence, 428 residues long: Spliceosome RNA helicase DDX39B (428 aa).

Over residues 1–19 (MAENDVDNELLDYEDDEVE) the composition is skewed to acidic residues. Residues 1 to 31 (MAENDVDNELLDYEDDEVETAAGGDGAEAPA) are disordered. Ala2 carries the N-acetylalanine modification. Lys36 is subject to N6-acetyllysine; alternate. A Glycyl lysine isopeptide (Lys-Gly) (interchain with G-Cter in SUMO2); alternate cross-link involves residue Lys36. Phosphoserine occurs at positions 38 and 41. The Q motif signature appears at 45–73 (SGFRDFLLKPELLRAIVDCGFEHPSEVQH). Residues 76–249 (IPQAILGMDV…RKFMQDPMEI (174 aa)) form the Helicase ATP-binding domain. 89–96 (AKSGMGKT) contacts ATP. Phosphothreonine is present on Thr172. Positions 196-199 (DECD) match the DECD box motif. One can recognise a Helicase C-terminal domain in the interval 261 to 422 (GLQQYYVKLK…ELPDEIDISS (162 aa)).

The protein belongs to the DEAD box helicase family. DECD subfamily. Homodimer, and heterodimer with DDX39A. DDX39B interacts with the THO subcomplex to form the THO-DDX39B complex which multimerizes into a 28-subunit tetrameric assembly. Component of the transcription/export (TREX) complex at least composed of ALYREF/THOC4, DDX39B, SARNP/CIP29, CHTOP and the THO subcomplex; in the complex interacts with THOC2. THOC1-THOC2-THOC3-DDX39B subcomplex is sufficient for the interaction with export factor NXF1-NXT1. TREX seems to have a dynamic structure involving ATP-dependent remodeling. Within the TREX complex bridges ALYREF/THOC4 and the THO subcomplex, and, in a ATP-dependent manner, ALYREF/THOC4 and SARNP/CIP29. Component of the spliceosome. Interacts directly with U2AF2. Interacts with RBM8A, RNPS1 and SRRM1, FYTTD1/UIF, THOC1, MX1 and POLDIP3. Interacts with LUZP4. Interacts with SARNP/CIP29 (via the C-terminal domain); the interaction is direct and facilitates RNA binding of DDX39B.

It localises to the nucleus. The protein resides in the nucleus speckle. The protein localises to the cytoplasm. It catalyses the reaction ATP + H2O = ADP + phosphate + H(+). In terms of biological role, involved in nuclear export of spliced and unspliced mRNA. Component of the TREX complex which is thought to couple mRNA transcription, processing and nuclear export, and specifically associates with spliced mRNA and not with unspliced pre-mRNA. The TREX complex is recruited to spliced mRNAs by a transcription-independent mechanism, binds to mRNA upstream of the exon-junction complex (EJC) and is recruited in a splicing- and cap-dependent manner to a region near the 5' end of the mRNA where it functions in mRNA export to the cytoplasm via the TAP/NXF1 pathway. The THOC1-THOC2-THOC3 core complex alone is sufficient to promote ATPase activity of DDX39B; in the complex THOC2 is the only component that directly interacts with DDX39B. Associates with SARNP/CIP29, which facilitates RNA binding of DDX39B and likely plays a role in mRNA export. May undergo several rounds of ATP hydrolysis during assembly of TREX to drive subsequent loading of components such as ALYREF/THOC4 and CHTOP onto mRNA. Also associates with pre-mRNA independent of ALYREF/THOC4. Involved in the nuclear export of intronless mRNA; the ATP-bound form is proposed to recruit export adapter ALYREF/THOC4 to intronless mRNA; its ATPase activity is cooperatively stimulated by RNA and ALYREF/THOC4 and ATP hydrolysis is thought to trigger the dissociation from RNA to allow the association of ALYREF/THOC4 and the NXF1-NXT1 heterodimer. Involved in transcription elongation and genome stability. Splice factor that is required for the first ATP-dependent step in spliceosome assembly and for the interaction of U2 snRNP with the branchpoint. Has both RNA-stimulated ATP binding/hydrolysis activity and ATP-dependent RNA unwinding activity. Even with the stimulation of RNA, the ATPase activity is weak. Can only hydrolyze ATP but not other NTPs. The RNA stimulation of ATPase activity does not have a strong preference for the sequence and length of the RNA. However, ssRNA stimulates the ATPase activity much more strongly than dsRNA. Can unwind 5' or 3' overhangs or blunt end RNA duplexes in vitro. The ATPase and helicase activities are not influenced by U2AF2; the effect of ALYREF/THOC4 is reported conflictingly. The protein is Spliceosome RNA helicase DDX39B (DDX39B) of Bos taurus (Bovine).